The primary structure comprises 25 residues: Unknown protein 4 (25 aa).

Positions 1–10 (IEHNAEEIRK) are enriched in basic and acidic residues. The disordered stretch occupies residues 1 to 25 (IEHNAEEIRKTAIRTAVQNTAQQTK). The segment covering 16-25 (AVQNTAQQTK) has biased composition (polar residues).

The protein is Unknown protein 4 of Lonomia obliqua (Moth).